Reading from the N-terminus, the 83-residue chain is Defensin-1 (83 aa).

The N-terminal stretch at 1–33 (MAGKGVGSRLSTLFLLVLLVITIGMMQVQVAEG) is a signal peptide. 4 disulfide bridges follow: Cys-36–Cys-82, Cys-47–Cys-67, Cys-53–Cys-76, and Cys-57–Cys-78.

Belongs to the DEFL family.

The protein resides in the secreted. Plant defense peptide. Has antifungal activity against B.cinera, F.oxysporum, F.solani and H.annosum with IC(50) values of 0.4 ug/ml, 2.9 ug/ml, 0.9 ug/ml and 1.4 ug/ml, respectively. Has modest antifungal activity against C.albicans and T.reesei. Causes thickening of F.oxysporum hyphae and an increase in their branching. Lacks antibacterial activity against the Gram-negative bacteria E.coli and E.carotovora. This is Defensin-1 from Pinus sylvestris (Scotch pine).